The chain runs to 139 residues: Putative pre-16S rRNA nuclease (139 aa).

It belongs to the YqgF nuclease family.

It is found in the cytoplasm. Could be a nuclease involved in processing of the 5'-end of pre-16S rRNA. In Proteus mirabilis (strain HI4320), this protein is Putative pre-16S rRNA nuclease.